Here is a 424-residue protein sequence, read N- to C-terminus: Enolase (424 aa).

Q162 is a binding site for (2R)-2-phosphoglycerate. The active-site Proton donor is the E204. Residues D241, E284, and D311 each contribute to the Mg(2+) site. (2R)-2-phosphoglycerate-binding residues include K336, R365, S366, and K387. The active-site Proton acceptor is K336.

Belongs to the enolase family. Mg(2+) is required as a cofactor.

It localises to the cytoplasm. Its subcellular location is the secreted. The protein localises to the cell surface. It carries out the reaction (2R)-2-phosphoglycerate = phosphoenolpyruvate + H2O. Its pathway is carbohydrate degradation; glycolysis; pyruvate from D-glyceraldehyde 3-phosphate: step 4/5. In terms of biological role, catalyzes the reversible conversion of 2-phosphoglycerate (2-PG) into phosphoenolpyruvate (PEP). It is essential for the degradation of carbohydrates via glycolysis. This Rhizobium etli (strain ATCC 51251 / DSM 11541 / JCM 21823 / NBRC 15573 / CFN 42) protein is Enolase.